The following is a 192-amino-acid chain: Pyridoxal 5'-phosphate synthase subunit PdxT (192 aa).

53 to 55 (GES) provides a ligand contact to L-glutamine. The active-site Nucleophile is the cysteine 82. Residues arginine 108 and 134–135 (IR) each bind L-glutamine. Active-site charge relay system residues include histidine 170 and glutamate 172.

This sequence belongs to the glutaminase PdxT/SNO family. In terms of assembly, in the presence of PdxS, forms a dodecamer of heterodimers. Only shows activity in the heterodimer.

The enzyme catalyses aldehydo-D-ribose 5-phosphate + D-glyceraldehyde 3-phosphate + L-glutamine = pyridoxal 5'-phosphate + L-glutamate + phosphate + 3 H2O + H(+). It catalyses the reaction L-glutamine + H2O = L-glutamate + NH4(+). Its pathway is cofactor biosynthesis; pyridoxal 5'-phosphate biosynthesis. Its function is as follows. Catalyzes the hydrolysis of glutamine to glutamate and ammonia as part of the biosynthesis of pyridoxal 5'-phosphate. The resulting ammonia molecule is channeled to the active site of PdxS. In Methanosphaera stadtmanae (strain ATCC 43021 / DSM 3091 / JCM 11832 / MCB-3), this protein is Pyridoxal 5'-phosphate synthase subunit PdxT.